Here is a 282-residue protein sequence, read N- to C-terminus: MIKNTFSRKKYFALSRRMEKEEEEKKVALPINCPSCSARIAAEALQRNLKVCPKCQHHFSLSARERIDLMVDKDSFQEFDADLSSFNLLDFPGYQEKLEKAQELSGSREGIITGLASIDGHKLVLGVMESGFMMASMGSVVGEKVCRAVEQAMELSCPLLICSCSGGARMQEGMVALMQMAKTSAVLGKFNQAGLLYISLLTHPTTGGVSASFASLADIILAEPGALIGFAGPRVIKQTIGQQLPPRFQRSEFLLEHGMIDLLVERSQLKATLSSLLGLHQG.

Positions 29–282 constitute a CoA carboxyltransferase N-terminal domain; it reads LPINCPSCSA…LSSLLGLHQG (254 aa). Zn(2+) is bound by residues cysteine 33, cysteine 36, cysteine 52, and cysteine 55. The segment at 33 to 55 adopts a C4-type zinc-finger fold; that stretch reads CPSCSARIAAEALQRNLKVCPKC.

Belongs to the AccD/PCCB family. As to quaternary structure, acetyl-CoA carboxylase is a heterohexamer composed of biotin carboxyl carrier protein (AccB), biotin carboxylase (AccC) and two subunits each of ACCase subunit alpha (AccA) and ACCase subunit beta (AccD). It depends on Zn(2+) as a cofactor.

It is found in the cytoplasm. It catalyses the reaction N(6)-carboxybiotinyl-L-lysyl-[protein] + acetyl-CoA = N(6)-biotinyl-L-lysyl-[protein] + malonyl-CoA. Its pathway is lipid metabolism; malonyl-CoA biosynthesis; malonyl-CoA from acetyl-CoA: step 1/1. Component of the acetyl coenzyme A carboxylase (ACC) complex. Biotin carboxylase (BC) catalyzes the carboxylation of biotin on its carrier protein (BCCP) and then the CO(2) group is transferred by the transcarboxylase to acetyl-CoA to form malonyl-CoA. This is Acetyl-coenzyme A carboxylase carboxyl transferase subunit beta from Syntrophomonas wolfei subsp. wolfei (strain DSM 2245B / Goettingen).